The sequence spans 133 residues: Large-conductance mechanosensitive channel (133 aa).

Helical transmembrane passes span 19–39 (IDLA…TSLV) and 79–99 (IQSV…VKLI).

Belongs to the MscL family. As to quaternary structure, homopentamer.

It localises to the cell membrane. Channel that opens in response to stretch forces in the membrane lipid bilayer. May participate in the regulation of osmotic pressure changes within the cell. This Clostridium tetani (strain Massachusetts / E88) protein is Large-conductance mechanosensitive channel.